The chain runs to 124 residues: Fluoride-specific ion channel FluC (124 aa).

4 consecutive transmembrane segments (helical) span residues 4-24 (LLLV…ISIF), 35-55 (FGTL…YALG), 60-80 (ISPE…TTFS), and 102-122 (VVLN…LVFS). Glycine 74 and threonine 77 together coordinate Na(+).

Belongs to the fluoride channel Fluc/FEX (TC 1.A.43) family.

It is found in the cell inner membrane. It catalyses the reaction fluoride(in) = fluoride(out). With respect to regulation, na(+) is not transported, but it plays an essential structural role and its presence is essential for fluoride channel function. Fluoride-specific ion channel. Important for reducing fluoride concentration in the cell, thus reducing its toxicity. The sequence is that of Fluoride-specific ion channel FluC from Shewanella oneidensis (strain ATCC 700550 / JCM 31522 / CIP 106686 / LMG 19005 / NCIMB 14063 / MR-1).